The primary structure comprises 560 residues: Trans-activating transcriptional regulatory protein (560 aa).

Disordered regions lie at residues M1–N25 and T99–K134.

It belongs to the nucleopolyhedrovirus IE-1 protein family.

Regulatory transcriptional protein, which trans-activates gene expression from early baculovirus promoters. Can also trans-activate its own promoter, suggesting that it is autoregulated during normal infection of insect cells. The sequence is that of Trans-activating transcriptional regulatory protein (IE1) from Orgyia pseudotsugata (Douglas-fir tussock moth).